The following is a 93-amino-acid chain: Large ribosomal subunit protein uL23 (93 aa).

This sequence belongs to the universal ribosomal protein uL23 family. As to quaternary structure, part of the 50S ribosomal subunit. Contacts protein L29, and trigger factor when it is bound to the ribosome.

Its function is as follows. One of the early assembly proteins it binds 23S rRNA. One of the proteins that surrounds the polypeptide exit tunnel on the outside of the ribosome. Forms the main docking site for trigger factor binding to the ribosome. The protein is Large ribosomal subunit protein uL23 of Campylobacter fetus subsp. fetus (strain 82-40).